We begin with the raw amino-acid sequence, 205 residues long: Thiamine-phosphate synthase (205 aa).

Residues 34 to 38 (QLRCK) and asparagine 66 each bind 4-amino-2-methyl-5-(diphosphooxymethyl)pyrimidine. Mg(2+) contacts are provided by aspartate 67 and aspartate 86. Serine 105 serves as a coordination point for 4-amino-2-methyl-5-(diphosphooxymethyl)pyrimidine. 131-133 (TTT) contributes to the 2-[(2R,5Z)-2-carboxy-4-methylthiazol-5(2H)-ylidene]ethyl phosphate binding site. Lysine 134 contributes to the 4-amino-2-methyl-5-(diphosphooxymethyl)pyrimidine binding site. Glycine 163 serves as a coordination point for 2-[(2R,5Z)-2-carboxy-4-methylthiazol-5(2H)-ylidene]ethyl phosphate.

This sequence belongs to the thiamine-phosphate synthase family. It depends on Mg(2+) as a cofactor.

The enzyme catalyses 2-[(2R,5Z)-2-carboxy-4-methylthiazol-5(2H)-ylidene]ethyl phosphate + 4-amino-2-methyl-5-(diphosphooxymethyl)pyrimidine + 2 H(+) = thiamine phosphate + CO2 + diphosphate. It catalyses the reaction 2-(2-carboxy-4-methylthiazol-5-yl)ethyl phosphate + 4-amino-2-methyl-5-(diphosphooxymethyl)pyrimidine + 2 H(+) = thiamine phosphate + CO2 + diphosphate. It carries out the reaction 4-methyl-5-(2-phosphooxyethyl)-thiazole + 4-amino-2-methyl-5-(diphosphooxymethyl)pyrimidine + H(+) = thiamine phosphate + diphosphate. Its pathway is cofactor biosynthesis; thiamine diphosphate biosynthesis; thiamine phosphate from 4-amino-2-methyl-5-diphosphomethylpyrimidine and 4-methyl-5-(2-phosphoethyl)-thiazole: step 1/1. In terms of biological role, condenses 4-methyl-5-(beta-hydroxyethyl)thiazole monophosphate (THZ-P) and 2-methyl-4-amino-5-hydroxymethyl pyrimidine pyrophosphate (HMP-PP) to form thiamine monophosphate (TMP). This chain is Thiamine-phosphate synthase, found in Neisseria meningitidis serogroup B (strain ATCC BAA-335 / MC58).